Consider the following 336-residue polypeptide: DNA-directed RNA polymerase subunit alpha (336 aa).

Residues 1 to 233 (MSSNSFLTPR…EQFSFFADLE (233 aa)) form an alpha N-terminal domain (alpha-NTD) region. The tract at residues 247 to 336 (IDPILLRPVD…YIKEPGHASS (90 aa)) is alpha C-terminal domain (alpha-CTD).

Belongs to the RNA polymerase alpha chain family. As to quaternary structure, homodimer. The RNAP catalytic core consists of 2 alpha, 1 beta, 1 beta' and 1 omega subunit. When a sigma factor is associated with the core the holoenzyme is formed, which can initiate transcription.

The catalysed reaction is RNA(n) + a ribonucleoside 5'-triphosphate = RNA(n+1) + diphosphate. Functionally, DNA-dependent RNA polymerase catalyzes the transcription of DNA into RNA using the four ribonucleoside triphosphates as substrates. The polypeptide is DNA-directed RNA polymerase subunit alpha (Nitrosomonas europaea (strain ATCC 19718 / CIP 103999 / KCTC 2705 / NBRC 14298)).